A 165-amino-acid chain; its full sequence is V-type proton ATPase 16 kDa proteolipid subunit (165 aa).

The Lumenal portion of the chain corresponds to 1–10; sequence MSSTFSGDET. The chain crosses the membrane as a helical span at residues 11–33; sequence APFFGFLGAAAALVFSCMGAAYG. Residues 34 to 55 are Cytoplasmic-facing; that stretch reads TAKSGVGVASMGVMRPELVMKS. The chain crosses the membrane as a helical span at residues 56–76; that stretch reads IVPVVMAGVLGIYGLIIAVII. Residues 77–95 lie on the Lumenal side of the membrane; it reads STGINPKAKSYYLFDGYAH. Residues 96 to 117 traverse the membrane as a helical segment; the sequence is LSSGLACGLAGLSAGMAIGIVG. Residues 118 to 129 are Cytoplasmic-facing; the sequence is DAGVRANAQQPK. Residues 130–155 traverse the membrane as a helical segment; the sequence is LFVGMILILIFAEALALYGLIVGIIL. Residues 156-165 are Lumenal-facing; the sequence is SSRAGQSRAD.

Belongs to the V-ATPase proteolipid subunit family. As to quaternary structure, V-ATPase is a heteromultimeric enzyme composed of a peripheral catalytic V1 complex (main components: subunits A, B, C, D, E, and F) attached to an integral membrane V0 proton pore complex (main component: the proteolipid protein; which is present as a hexamer that forms the proton-conducting pore). In terms of tissue distribution, higher expression in leaves, followed by roots and weakly in flowers. Expression in leaves is light-dependent.

It localises to the vacuole membrane. Its function is as follows. Proton-conducting pore forming subunit of the membrane integral V0 complex of vacuolar ATPase. V-ATPase is responsible for acidifying a variety of intracellular compartments in eukaryotic cells. Necessary for the crassulacean acid metabolism. This chain is V-type proton ATPase 16 kDa proteolipid subunit, found in Kalanchoe daigremontiana (Devil's backbone).